The following is a 208-amino-acid chain: DNA-binding protein HupB (208 aa).

A bacterial histone-like domain region spans residues Met-1–Ser-90. Lys-3 carries the N6-acetyllysine modification. Residue Lys-3 is modified to N6-acetyllysine; alternate; partial. An N6-methyllysine; alternate; partial modification is found at Lys-3. Lys-72 is subject to N6-acetyllysine; partial. Residue Lys-86 is modified to N6-methyllysine; partial. A C-terminus, required for nucleoid localization region spans residues Ala-92–Arg-208. Lys-94 and Lys-103 each carry N6-acetyllysine; alternate; partial. An N6-methyllysine; alternate; partial mark is found at Lys-94 and Lys-103. The tract at residues Pro-96–Arg-208 is disordered. The degenerate repeats region stretch occupies residues Ala-101–Lys-205. Residues Lys-113–Arg-208 are compositionally biased toward basic residues. N6-acetyllysine is present on residues Lys-116, Lys-136, Lys-149, and Lys-168.

The protein belongs to the bacterial histone-like protein family. Long actinobacterial subfamily. May form oligomers. Interacts with RNase E (rne). In addition to the identifed modifications, is also methylated on one of Arg-53; Arg-54 or Arg-55.

The protein localises to the cytoplasm. It is found in the nucleoid. It localises to the secreted. The protein resides in the cell wall. It carries out the reaction 4 Fe(2+) + O2 + 4 H(+) = 4 Fe(3+) + 2 H2O. With respect to regulation, trans-stilbene derivative 4,4'-[(E)-ethene-1,2 diylbis({5[(phenylcarbonyl)amino]benzene-2,1-diyl}sulfonylimino)] dibenzoic acid (SD1) inhibits DNA binding at 50 uM. SD1 does not inhibit growth in a range of 3-1600 uM. A nucleoid-associated protein (NAP) that plays a crucial role in local chromosome architecture. Helps organize newly replicated oriC proximal regions and contributes to the timing of replication initiation and coordinating replication with chromosome segregation. There are between 30,000-60,000 molecules in a log phase cell; the protein-DNA complex is dynamic during the cell cycle, with more complexes near the cell ends. Binds irregularly along the chromosome with higher binding near the origin of replication (oriC) and lowest binding near the chromosome terminus (ter). Binds DNA non-sequence specifically via both its N- and C-terminal domains with high affinity, has no preference for linear or supercoiled DNA. Binds four-way junction DNA. Represses T7 RNA polymerase in vitro. The C-terminal domain enhances DNA end-joining in vitro in the presence of T4 DNA ligase. RNase E and HupB jointly contribute to cellular adaptation to changing growth conditions and survival during antibiotic treatment. Its function is as follows. Has ferroxidase activity, converts Fe(2+) into Fe(3+). Binds Fe(3+) but not Fe(2+); prevents the generation of hydroxyl radicals by the Fenton reaction and thus protects DNA from damage. May function in iron storage. In terms of biological role, plays a role in epigenetic resistance to antibiotics. Growth on levels of isoniazid (INH) near the minimal inhibitory concentration (MIC) kills most bacteria. The surviving cells grow as either large or small colony variants (SCV), evidence suggest SCVs are associated with persistent infections. Mutating this protein leads to specific loss of SCVs. Functionally, may play a role in cell wall assembly. In Mycolicibacterium smegmatis (strain ATCC 700084 / mc(2)155) (Mycobacterium smegmatis), this protein is DNA-binding protein HupB.